A 326-amino-acid polypeptide reads, in one-letter code: Homeobox protein Hox-A1 (326 aa).

An Antp-type hexapeptide motif is present at residues 196-201 (TFDWMK). The segment at residues 221–280 (PNTVRTNFTTKQLTELEKEFHFNKYLTRARRVEIAAALQLNETQVKIWFQNRRMKQKKRE) is a DNA-binding region (homeobox). Residues 273–326 (RMKQKKREKEGLTSASPATPGSEANTEDTSDKCNSTSSTPSPSSSTSETINTSG) form a disordered region. Over residues 285-296 (TSASPATPGSEA) the composition is skewed to polar residues. Low complexity predominate over residues 306-326 (NSTSSTPSPSSSTSETINTSG).

Belongs to the Antp homeobox family. Labial subfamily.

The protein localises to the nucleus. Functionally, sequence-specific transcription factor. Part of a developmental regulatory system that provides cells with specific positional identities on the anterior-posterior axis. Acts on the anterior body structures. Seems to act in the maintenance and/or generation of hindbrain segments. This Heterodontus francisci (Horn shark) protein is Homeobox protein Hox-A1 (HOXA1).